A 301-amino-acid polypeptide reads, in one-letter code: Glycine--tRNA ligase alpha subunit (301 aa).

Belongs to the class-II aminoacyl-tRNA synthetase family. As to quaternary structure, tetramer of two alpha and two beta subunits.

The protein localises to the cytoplasm. The catalysed reaction is tRNA(Gly) + glycine + ATP = glycyl-tRNA(Gly) + AMP + diphosphate. This Proteus mirabilis (strain HI4320) protein is Glycine--tRNA ligase alpha subunit.